Consider the following 172-residue polypeptide: Ribosome maturation factor RimM (172 aa).

The region spanning 96–168 (DGEFYYHEII…RIEVELMEGL (73 aa)) is the PRC barrel domain.

The protein belongs to the RimM family. As to quaternary structure, binds ribosomal protein uS19.

It localises to the cytoplasm. Its function is as follows. An accessory protein needed during the final step in the assembly of 30S ribosomal subunit, possibly for assembly of the head region. Essential for efficient processing of 16S rRNA. May be needed both before and after RbfA during the maturation of 16S rRNA. It has affinity for free ribosomal 30S subunits but not for 70S ribosomes. The polypeptide is Ribosome maturation factor RimM (Streptococcus thermophilus (strain ATCC BAA-491 / LMD-9)).